Reading from the N-terminus, the 257-residue chain is Diphthine synthase (257 aa).

Residues L9, D85, V88, 113 to 114, L164, A209, and H234 contribute to the S-adenosyl-L-methionine site; that span reads SI.

The protein belongs to the diphthine synthase family. In terms of assembly, homodimer.

It catalyses the reaction 2-[(3S)-amino-3-carboxypropyl]-L-histidyl-[translation elongation factor 2] + 3 S-adenosyl-L-methionine = diphthine-[translation elongation factor 2] + 3 S-adenosyl-L-homocysteine + 3 H(+). It participates in protein modification; peptidyl-diphthamide biosynthesis. Its function is as follows. S-adenosyl-L-methionine-dependent methyltransferase that catalyzes the trimethylation of the amino group of the modified target histidine residue in translation elongation factor 2 (EF-2), to form an intermediate called diphthine. The three successive methylation reactions represent the second step of diphthamide biosynthesis. The sequence is that of Diphthine synthase from Methanocaldococcus jannaschii (strain ATCC 43067 / DSM 2661 / JAL-1 / JCM 10045 / NBRC 100440) (Methanococcus jannaschii).